Reading from the N-terminus, the 351-residue chain is Peptidyl-Lys metalloendopeptidase (351 aa).

The first 22 residues, 1-22 (MFSLSSRFFLYSLCLSAVAVSA), serve as a signal peptide directing secretion. Positions 23–183 (APGLSLSLSG…VARRSNLGKR (161 aa)) are excised as a propeptide. 2 cysteine pairs are disulfide-bonded: Cys-189–Cys-259 and Cys-261–Cys-281. Zn(2+) is bound at residue His-301. Glu-302 is a catalytic residue. Residues His-305 and Asp-314 each coordinate Zn(2+).

It belongs to the peptidase M35 family. Zn(2+) is required as a cofactor.

The protein localises to the secreted. The catalysed reaction is Preferential cleavage in proteins: -Xaa-|-Lys- (in which Xaa may be Pro).. Inhibited by chelating agents such as imidazole, alpha,alpha'-bipyridine, and 1,10-phenanthroline. The chain is Peptidyl-Lys metalloendopeptidase (MEP) from Armillaria mellea (Honey mushroom).